The sequence spans 137 residues: Actin-depolymerizing factor 12 (137 aa).

The residue at position 6 (Ser-6) is a Phosphoserine. An ADF-H domain is found at 7–137; it reads GMAVEDECKL…SLDIIKSRAL (131 aa).

This sequence belongs to the actin-binding proteins ADF family. As to expression, specifically expressed in pollen.

The protein localises to the cytoplasm. It is found in the cytoskeleton. Actin-depolymerizing protein. Severs actin filaments (F-actin) and binds to actin monomers. This chain is Actin-depolymerizing factor 12, found in Arabidopsis thaliana (Mouse-ear cress).